The sequence spans 308 residues: Nodulation protein D 1 (308 aa).

Residues 6–63 (LDLNLLVALDALMTERKLTAAARRINLSQPAMSAAIARLRTYFGDELFSMQGRELIPT) enclose the HTH lysR-type domain. The H-T-H motif DNA-binding region spans 23–42 (LTAAARRINLSQPAMSAAIA).

Belongs to the LysR transcriptional regulatory family.

NodD regulates the expression of the nodABCFE genes which encode other nodulation proteins. NodD is also a negative regulator of its own expression. Binds flavonoids as inducers. The sequence is that of Nodulation protein D 1 (nodD1) from Rhizobium meliloti (strain 1021) (Ensifer meliloti).